A 342-amino-acid polypeptide reads, in one-letter code: Heat-inducible transcription repressor HrcA (342 aa).

It belongs to the HrcA family.

Functionally, negative regulator of class I heat shock genes (grpE-dnaK-dnaJ and groELS operons). Prevents heat-shock induction of these operons. The protein is Heat-inducible transcription repressor HrcA of Corynebacterium efficiens (strain DSM 44549 / YS-314 / AJ 12310 / JCM 11189 / NBRC 100395).